Consider the following 221-residue polypeptide: Pectate lyase C (221 aa).

Positions 1-28 are cleaved as a signal peptide; sequence MKRLAGTVILSGLLVCGFGQALPEKALA.

It belongs to the polysaccharide lyase 3 family. It depends on Ca(2+) as a cofactor.

Its subcellular location is the secreted. It catalyses the reaction Eliminative cleavage of (1-&gt;4)-alpha-D-galacturonan to give oligosaccharides with 4-deoxy-alpha-D-galact-4-enuronosyl groups at their non-reducing ends.. It carries out the reaction Eliminative cleavage of (1-&gt;4)-alpha-D-galacturonan methyl ester to give oligosaccharides with 4-deoxy-6-O-methyl-alpha-D-galact-4-enuronosyl groups at their non-reducing ends.. It functions in the pathway glycan metabolism; pectin degradation; 2-dehydro-3-deoxy-D-gluconate from pectin: step 2/5. Its function is as follows. Catalyzes the depolymerization of both polygalacturonate and pectins of methyl esterification degree from 22 to 89%, with an endo mode of action. In contrast to the majority of pectate lyases, displays high activity on highly methylated pectins. The protein is Pectate lyase C (pelC) of Bacillus licheniformis (strain ATCC 14580 / DSM 13 / JCM 2505 / CCUG 7422 / NBRC 12200 / NCIMB 9375 / NCTC 10341 / NRRL NRS-1264 / Gibson 46).